The primary structure comprises 308 residues: Apolipoprotein F (308 aa).

This sequence belongs to the apolipoprotein F family.

It is found in the secreted. Minor apolipoprotein that associates with LDL. Inhibits cholesteryl ester transfer protein (CETP) activity and appears to be an important regulator of cholesterol transport. Also associates to a lesser degree with VLDL, Apo-AI and Apo-AII. The polypeptide is Apolipoprotein F (Apof) (Rattus norvegicus (Rat)).